The chain runs to 879 residues: Phosphoenolpyruvate carboxylase (879 aa).

Residues His-141 and Lys-546 contribute to the active site.

This sequence belongs to the PEPCase type 1 family. The cofactor is Mg(2+).

It catalyses the reaction oxaloacetate + phosphate = phosphoenolpyruvate + hydrogencarbonate. Its function is as follows. Forms oxaloacetate, a four-carbon dicarboxylic acid source for the tricarboxylic acid cycle. The protein is Phosphoenolpyruvate carboxylase of Stutzerimonas stutzeri (strain A1501) (Pseudomonas stutzeri).